A 915-amino-acid polypeptide reads, in one-letter code: Protein translocase subunit SecA (915 aa).

Residues Gln87, 105–109 (GEGKT), and Asp516 each bind ATP. Residues 854–915 (QKMQMRHEQL…KYKNCHGQLE (62 aa)) form a disordered region. Cys899, Cys901, Cys910, and His911 together coordinate Zn(2+).

Belongs to the SecA family. Monomer and homodimer. Part of the essential Sec protein translocation apparatus which comprises SecA, SecYEG and auxiliary proteins SecDF-YajC and YidC. It depends on Zn(2+) as a cofactor.

The protein localises to the cell inner membrane. Its subcellular location is the cytoplasm. It catalyses the reaction ATP + H2O + cellular proteinSide 1 = ADP + phosphate + cellular proteinSide 2.. In terms of biological role, part of the Sec protein translocase complex. Interacts with the SecYEG preprotein conducting channel. Has a central role in coupling the hydrolysis of ATP to the transfer of proteins into and across the cell membrane, serving both as a receptor for the preprotein-SecB complex and as an ATP-driven molecular motor driving the stepwise translocation of polypeptide chains across the membrane. The sequence is that of Protein translocase subunit SecA from Cellvibrio japonicus (strain Ueda107) (Pseudomonas fluorescens subsp. cellulosa).